Consider the following 464-residue polypeptide: Sushi repeat-containing protein SRPX (464 aa).

Positions Met-1–Ser-28 are cleaved as a signal peptide. O-linked (Xyl...) (chondroitin sulfate) serine glycosylation is present at Ser-34. 5 cysteine pairs are disulfide-bonded: Cys-57/Cys-85, Cys-69/Cys-103, Cys-89/Cys-115, Cys-120/Cys-161, and Cys-147/Cys-174. Sushi domains lie at Cys-57–Gln-117 and Lys-118–Asp-176. Residues Met-177–Val-259 enclose the HYR domain. Residues Arg-260–Ala-319 enclose the Sushi 3 domain. Intrachain disulfides connect Cys-262–Cys-304 and Cys-290–Cys-317.

Normal cells and cells transformed by human papillomavirus type 16 E6E7 and polyomavirus large T. Suppressed in cells transformed by oncogenes such as V-SRC, V-ABL, V-FPS, V-MOS, V-SIS, V-K-RAS, and polyomavirus middle T.

In Rattus norvegicus (Rat), this protein is Sushi repeat-containing protein SRPX (Srpx).